Here is a 221-residue protein sequence, read N- to C-terminus: Transmembrane emp24 domain-containing protein 3 (221 aa).

The signal sequence occupies residues 1-25; that stretch reads MVHEAPHASSFQMLLQLLLLLLLRA. Over 28–184 the chain is Lumenal; that stretch reads LRSAELTFEL…RAEDLNSRVS (157 aa). Residues 42–124 enclose the GOLD domain; that stretch reads KQCFHEEVEQ…HKTVYFDFQV (83 aa). Arg-103 is subject to Dimethylated arginine. A helical transmembrane segment spans residues 185-205; that stretch reads YWSVGETIALFVVSFSQVLLL. Residues 206–221 lie on the Cytoplasmic side of the membrane; it reads KSFFTEKRPVNRAVHS. Positions 208-209 match the COPII vesicle coat-binding motif; that stretch reads FF. The short motif at 208-221 is the COPI vesicle coat-binding element; the sequence is FFTEKRPVNRAVHS.

This sequence belongs to the EMP24/GP25L family. As to quaternary structure, monomer in endoplasmic reticulum, endoplasmic reticulum-Golgi intermediate compartment and cis-Golgi network. Interacts (via C-terminus) with COPG1; the interaction involves dimeric TMED3; however, there are conflicting reports on the interaction. Interacts with GORASP1 and GORASP2.

It is found in the endoplasmic reticulum-Golgi intermediate compartment membrane. Its subcellular location is the golgi apparatus. It localises to the cis-Golgi network membrane. The protein localises to the golgi stack membrane. The protein resides in the endoplasmic reticulum membrane. It is found in the cytoplasmic vesicle. Its subcellular location is the COPI-coated vesicle membrane. In terms of biological role, potential role in vesicular protein trafficking, mainly in the early secretory pathway. Contributes to the coupled localization of TMED2 and TMED10 in the cis-Golgi network. The protein is Transmembrane emp24 domain-containing protein 3 (Tmed3) of Mus musculus (Mouse).